Here is a 126-residue protein sequence, read N- to C-terminus: Small ribosomal subunit protein bS6 (126 aa).

A disordered region spans residues 99–126 (PLPAPRVVPGTEAPEPAQAAETPEPEAS). Low complexity predominate over residues 107–120 (PGTEAPEPAQAAET).

The protein belongs to the bacterial ribosomal protein bS6 family.

Functionally, binds together with bS18 to 16S ribosomal RNA. The protein is Small ribosomal subunit protein bS6 of Synechococcus sp. (strain CC9902).